Here is a 210-residue protein sequence, read N- to C-terminus: Large ribosomal subunit protein uL16 (210 aa).

Belongs to the universal ribosomal protein uL16 family. Component of the large ribosomal subunit. Mature ribosomes consist of a small (40S) and a large (60S) subunit. The 40S subunit contains about 33 different proteins and 1 molecule of RNA (18S). The 60S subunit contains about 49 different proteins and 3 molecules of RNA (28S, 5.8S and 5S).

It localises to the cytoplasm. Functionally, component of the large ribosomal subunit. Plays a role in the formation of actively translating ribosomes. Its function is as follows. (Microbial infection) Seems to bind to the leucine zipper of viral and cellular JUN. The polypeptide is Large ribosomal subunit protein uL16 (Gallus gallus (Chicken)).